Here is a 404-residue protein sequence, read N- to C-terminus: G1/S-specific cyclin-E2 (404 aa).

A disordered region spans residues 1 to 44 (MSRRSSRLQAKQQPQPSQTESPQEAQIIQAKKRKTTQDVKKRRE). The segment covering 12 to 26 (QQPQPSQTESPQEAQ) has biased composition (low complexity). Residue serine 21 is modified to Phosphoserine. A compositionally biased stretch (basic and acidic residues) spans 35–44 (TTQDVKKRRE). An N6-lactoyllysine modification is found at lysine 348. Serine 383 is modified (phosphoserine). Threonine 392 is modified (phosphothreonine).

Belongs to the cyclin family. Cyclin E subfamily. As to quaternary structure, interacts with the CDK2 (in vivo) and CDK3 (in vitro) protein kinases to form a serine/threonine kinase holoenzyme complex. The cyclin subunit imparts substrate specificity to the complex. Post-translationally, phosphorylation by CDK2 triggers its release from CDK2 and degradation via the ubiquitin proteasome pathway. In terms of processing, lactylated at Lys-348. Delactylated by SIRT3. In terms of tissue distribution, according to PubMed:9858585, highest levels of expression in adult testis, thymus and brain. Lower levels in placenta, spleen and colon. Consistently elevated levels in tumor-derived cells compared to non-transformed proliferating cells. According to PubMed:9840927: low levels in thymus, prostate, brain, skeletal muscle, and kidney. Elevated levels in lung. According to PubMed:9840943 highly expressed in testis, placenta, thymus and brain. In a lesser extent in small intestine and colon.

The protein localises to the nucleus. In terms of biological role, essential for the control of the cell cycle at the late G1 and early S phase. In Homo sapiens (Human), this protein is G1/S-specific cyclin-E2 (CCNE2).